The sequence spans 764 residues: Subtilisin-like protease SBT1.6 (764 aa).

Positions 1-20 are cleaved as a signal peptide; that stretch reads MASSTIVLLLFLSFPFISFA. The region spanning 46–99 is the Inhibitor I9 domain; that stretch reads HWYSTEFAEESRIVHVYHTVFHGFSAVVTPDEADNLRNHPAVLAVFEDRRRELH. A Peptidase S8 domain is found at 103-606; sequence SPQFLGLQNQ…SGHLNLGRAM (504 aa). The active-site Charge relay system is the aspartate 131. A glycan (N-linked (GlcNAc...) asparagine) is linked at asparagine 191. Catalysis depends on histidine 205, which acts as the Charge relay system. The region spanning 377-457 is the PA domain; it reads SSASLCMENT…NEGDRIKAYA (81 aa). Catalysis depends on serine 538, which acts as the Charge relay system. N-linked (GlcNAc...) asparagine glycosylation occurs at asparagine 578.

This sequence belongs to the peptidase S8 family. In terms of tissue distribution, expressed in roots, leaves and flowers of mature plants.

This Arabidopsis thaliana (Mouse-ear cress) protein is Subtilisin-like protease SBT1.6.